The following is a 248-amino-acid chain: MSVTMREMLEAGVHFGHQTRFWNPKMAPFIFGHRNRIHIVNLEKTMGMYQEAMKYIRQLSSNRGTVLFVGTKRQARETIAAEAQRAGMPYVDQRWLGGMLTNFKTIKTSIKRLKEMEASIEDGSVQKLSKKEALMFEREKIKLEKSIGGIKDMGGIPDAIFVVDVGYHKGAITEAAKLGIPVIGVVDTNHSPEGVTYVIPGNDDSSKAIMLYARGVADAILEGRANATNDLVESIKGGDDFVEVSEQA.

This sequence belongs to the universal ribosomal protein uS2 family.

The chain is Small ribosomal subunit protein uS2 from Janthinobacterium sp. (strain Marseille) (Minibacterium massiliensis).